Consider the following 188-residue polypeptide: ATP synthase subunit b (188 aa).

The helical transmembrane segment at 24–44 threads the bilayer; the sequence is LPASYDIVWSLVVFIIVLILF.

This sequence belongs to the ATPase B chain family. In terms of assembly, F-type ATPases have 2 components, F(1) - the catalytic core - and F(0) - the membrane proton channel. F(1) has five subunits: alpha(3), beta(3), gamma(1), delta(1), epsilon(1). F(0) has three main subunits: a(1), b(2) and c(10-14). The alpha and beta chains form an alternating ring which encloses part of the gamma chain. F(1) is attached to F(0) by a central stalk formed by the gamma and epsilon chains, while a peripheral stalk is formed by the delta and b chains.

The protein resides in the cell membrane. In terms of biological role, f(1)F(0) ATP synthase produces ATP from ADP in the presence of a proton or sodium gradient. F-type ATPases consist of two structural domains, F(1) containing the extramembraneous catalytic core and F(0) containing the membrane proton channel, linked together by a central stalk and a peripheral stalk. During catalysis, ATP synthesis in the catalytic domain of F(1) is coupled via a rotary mechanism of the central stalk subunits to proton translocation. Functionally, component of the F(0) channel, it forms part of the peripheral stalk, linking F(1) to F(0). The polypeptide is ATP synthase subunit b (Corynebacterium diphtheriae (strain ATCC 700971 / NCTC 13129 / Biotype gravis)).